Here is a 952-residue protein sequence, read N- to C-terminus: Protein translocase subunit SecA (952 aa).

ATP contacts are provided by residues Gln-104, 122–126, and Asp-512; that span reads GEGKT.

The protein belongs to the SecA family. As to quaternary structure, monomer and homodimer. Part of the essential Sec protein translocation apparatus which comprises SecA, SecYEG and auxiliary proteins SecDF. Other proteins may also be involved.

The protein resides in the cell inner membrane. It localises to the cytoplasm. It catalyses the reaction ATP + H2O + cellular proteinSide 1 = ADP + phosphate + cellular proteinSide 2.. Part of the Sec protein translocase complex. Interacts with the SecYEG preprotein conducting channel. Has a central role in coupling the hydrolysis of ATP to the transfer of proteins into and across the cell membrane, serving as an ATP-driven molecular motor driving the stepwise translocation of polypeptide chains across the membrane. The polypeptide is Protein translocase subunit SecA (Gloeobacter violaceus (strain ATCC 29082 / PCC 7421)).